A 130-amino-acid polypeptide reads, in one-letter code: Small ribosomal subunit protein uS9 (130 aa).

This sequence belongs to the universal ribosomal protein uS9 family.

The chain is Small ribosomal subunit protein uS9 from Burkholderia thailandensis (strain ATCC 700388 / DSM 13276 / CCUG 48851 / CIP 106301 / E264).